Here is a 599-residue protein sequence, read N- to C-terminus: Elongation factor 4 (599 aa).

The tr-type G domain maps to 2–184 (NYKRNFSIIA…RLVRDIPAPK (183 aa)). Residues 14–19 (DHGKST) and 131–134 (NKID) contribute to the GTP site.

This sequence belongs to the TRAFAC class translation factor GTPase superfamily. Classic translation factor GTPase family. LepA subfamily.

The protein localises to the cell membrane. The catalysed reaction is GTP + H2O = GDP + phosphate + H(+). Required for accurate and efficient protein synthesis under certain stress conditions. May act as a fidelity factor of the translation reaction, by catalyzing a one-codon backward translocation of tRNAs on improperly translocated ribosomes. Back-translocation proceeds from a post-translocation (POST) complex to a pre-translocation (PRE) complex, thus giving elongation factor G a second chance to translocate the tRNAs correctly. Binds to ribosomes in a GTP-dependent manner. This Hamiltonella defensa subsp. Acyrthosiphon pisum (strain 5AT) protein is Elongation factor 4.